We begin with the raw amino-acid sequence, 63 residues long: Large ribosomal subunit protein uL29 (63 aa).

Belongs to the universal ribosomal protein uL29 family.

This is Large ribosomal subunit protein uL29 from Shewanella baltica (strain OS223).